A 402-amino-acid chain; its full sequence is Nuclear hormone receptor family member nhr-96 (402 aa).

A DNA-binding region (nuclear receptor) is located at residues 4 to 79; that stretch reads FGLCAVCGQV…VGMDVKKIQQ (76 aa). 2 consecutive NR C4-type zinc fingers follow at residues 7 to 27 and 44 to 67; these read CAVCGQVTTGKNFGVISCRSC and CVKASCAIFENGKFKCKKCRLKRC. In terms of domain architecture, NR LBD spans 154 to 402; sequence NYYNSLELLT…FSDPEMFELT (249 aa).

The protein belongs to the nuclear hormone receptor family.

It is found in the nucleus. Orphan nuclear receptor. The chain is Nuclear hormone receptor family member nhr-96 (nhr-96) from Caenorhabditis elegans.